The following is a 158-amino-acid chain: 6,7-dimethyl-8-ribityllumazine synthase (158 aa).

5-amino-6-(D-ribitylamino)uracil-binding positions include F23, 57 to 59 (AFE), and 81 to 83 (TVI). 86-87 (GT) is a (2S)-2-hydroxy-3-oxobutyl phosphate binding site. H89 (proton donor) is an active-site residue. F114 is a 5-amino-6-(D-ribitylamino)uracil binding site. Residue R128 coordinates (2S)-2-hydroxy-3-oxobutyl phosphate.

Belongs to the DMRL synthase family.

The enzyme catalyses (2S)-2-hydroxy-3-oxobutyl phosphate + 5-amino-6-(D-ribitylamino)uracil = 6,7-dimethyl-8-(1-D-ribityl)lumazine + phosphate + 2 H2O + H(+). It participates in cofactor biosynthesis; riboflavin biosynthesis; riboflavin from 2-hydroxy-3-oxobutyl phosphate and 5-amino-6-(D-ribitylamino)uracil: step 1/2. Catalyzes the formation of 6,7-dimethyl-8-ribityllumazine by condensation of 5-amino-6-(D-ribitylamino)uracil with 3,4-dihydroxy-2-butanone 4-phosphate. This is the penultimate step in the biosynthesis of riboflavin. The chain is 6,7-dimethyl-8-ribityllumazine synthase from Desulforudis audaxviator (strain MP104C).